We begin with the raw amino-acid sequence, 121 residues long: Trypsin/alpha-amylase inhibitor CMX2 (121 aa).

Positions 1 to 24 (MAFKHQLILSTAILLAVLAAASAS) are cleaved as a signal peptide.

It belongs to the protease inhibitor I6 (cereal trypsin/alpha-amylase inhibitor) family.

Its subcellular location is the secreted. This is Trypsin/alpha-amylase inhibitor CMX2 from Triticum aestivum (Wheat).